Reading from the N-terminus, the 348-residue chain is S-adenosylmethionine:tRNA ribosyltransferase-isomerase (348 aa).

This sequence belongs to the QueA family. As to quaternary structure, monomer.

Its subcellular location is the cytoplasm. The catalysed reaction is 7-aminomethyl-7-carbaguanosine(34) in tRNA + S-adenosyl-L-methionine = epoxyqueuosine(34) in tRNA + adenine + L-methionine + 2 H(+). It functions in the pathway tRNA modification; tRNA-queuosine biosynthesis. Its function is as follows. Transfers and isomerizes the ribose moiety from AdoMet to the 7-aminomethyl group of 7-deazaguanine (preQ1-tRNA) to give epoxyqueuosine (oQ-tRNA). The protein is S-adenosylmethionine:tRNA ribosyltransferase-isomerase of Alteromonas mediterranea (strain DSM 17117 / CIP 110805 / LMG 28347 / Deep ecotype).